A 653-amino-acid polypeptide reads, in one-letter code: Epithelial sodium channel subunit gamma (653 aa).

Residues 1–54 are Cytoplasmic-facing; the sequence is MGHGRRISESIKKQLPVTGPEAPTVKNLMDWYLNNTNTHGCRRIAVSRGYLRRW. The helical transmembrane segment at 55-75 threads the bilayer; it reads IWICFTVSSVGMIFWQWTLLL. Residues 76–546 lie on the Extracellular side of the membrane; sequence MSYYTVSVSV…GGQLGLWMSC (471 aa). 8 disulfides stabilise this stretch: C100–C290, C214–C221, C267–C274, C379–C464, C401–C460, C405–C456, C414–C441, and C416–C430. A helical transmembrane segment spans residues 547–567; that stretch reads SIVCFLEMWEVFLVDILTIIA. Over 568-653 the chain is Cytoplasmic; it reads RYWLHRGRQW…DEQVSDTEVN (86 aa). The tract at residues 582-608 is disordered; that stretch reads KERQMQQPSPPDHDTGHHNPVCIDDED.

It belongs to the amiloride-sensitive sodium channel (TC 1.A.6) family. SCNN1G subfamily. Component of the heterotrimeric epithelial sodium channel (ENaC) composed of an alpha/SCNN1A, a beta/SCNN1B and a gamma/SCNN1G subunit. As to expression, strongly expressed in gill, liver, kidney and rectum and more weakly in heart, muscle and intestine.

It is found in the apical cell membrane. It catalyses the reaction Na(+)(in) = Na(+)(out). Originally identified and characterized by its inhibition by the diuretic drug amiloride. Its function is as follows. This is one of the three pore-forming subunits of the heterotrimeric epithelial sodium channel (ENaC), a critical regulator of sodium balance and fluid homeostasis. ENaC operates in epithelial tissues, where it mediates the electrodiffusion of sodium ions from extracellular fluid through the apical membrane of cells, with water following osmotically. This Neoceratodus forsteri (Australian lungfish) protein is Epithelial sodium channel subunit gamma.